The following is a 137-amino-acid chain: Large-conductance mechanosensitive channel (137 aa).

A run of 2 helical transmembrane segments spans residues 9 to 29 (AFAV…GAAF) and 79 to 99 (IQTI…VKAI).

The protein belongs to the MscL family. As to quaternary structure, homopentamer.

The protein localises to the cell inner membrane. Functionally, channel that opens in response to stretch forces in the membrane lipid bilayer. May participate in the regulation of osmotic pressure changes within the cell. This chain is Large-conductance mechanosensitive channel, found in Pseudomonas paraeruginosa (strain DSM 24068 / PA7) (Pseudomonas aeruginosa (strain PA7)).